We begin with the raw amino-acid sequence, 348 residues long: Bifunctional dihydroflavonol 4-reductase/flavanone 4-reductase (348 aa).

Residues K44 and Y163 each coordinate NADP(+).

Belongs to the NAD(P)-dependent epimerase/dehydratase family. Dihydroflavonol-4-reductase subfamily.

The catalysed reaction is a (2R,3S,4S)-leucoanthocyanidin + NADP(+) = a (2R,3R)-dihydroflavonol + NADPH + H(+). The enzyme catalyses (2S)-flavan-4-ol + NADP(+) = (2S)-flavanone + NADPH + H(+). In terms of biological role, bifunctional enzyme involved in flavonoid metabolism. May use dihydroquercetin, dihydrokaempferol, eriodictyol, garbanzol (5-deoxydihydrokaempferol), dihydrofisetin (5-deoxydihydroquercetin), naringenin to a low extent (10%), but not 5-deoxynaringenin or butin (5-deoxyeriodictyol) as substrate. This is Bifunctional dihydroflavonol 4-reductase/flavanone 4-reductase (DFR) from Malus domestica (Apple).